We begin with the raw amino-acid sequence, 92 residues long: Elongation factor 1-beta (92 aa).

The protein belongs to the EF-1-beta/EF-1-delta family.

Functionally, promotes the exchange of GDP for GTP in EF-1-alpha/GDP, thus allowing the regeneration of EF-1-alpha/GTP that could then be used to form the ternary complex EF-1-alpha/GTP/AAtRNA. This Hyperthermus butylicus (strain DSM 5456 / JCM 9403 / PLM1-5) protein is Elongation factor 1-beta.